The following is a 190-amino-acid chain: Elongation factor P (190 aa).

The protein belongs to the elongation factor P family.

The protein resides in the cytoplasm. It functions in the pathway protein biosynthesis; polypeptide chain elongation. Functionally, involved in peptide bond synthesis. Stimulates efficient translation and peptide-bond synthesis on native or reconstituted 70S ribosomes in vitro. Probably functions indirectly by altering the affinity of the ribosome for aminoacyl-tRNA, thus increasing their reactivity as acceptors for peptidyl transferase. This chain is Elongation factor P, found in Pseudomonas fluorescens (strain SBW25).